The chain runs to 119 residues: Large ribosomal subunit protein uL22 (119 aa).

It belongs to the universal ribosomal protein uL22 family. Part of the 50S ribosomal subunit.

In terms of biological role, this protein binds specifically to 23S rRNA; its binding is stimulated by other ribosomal proteins, e.g. L4, L17, and L20. It is important during the early stages of 50S assembly. It makes multiple contacts with different domains of the 23S rRNA in the assembled 50S subunit and ribosome. The globular domain of the protein is located near the polypeptide exit tunnel on the outside of the subunit, while an extended beta-hairpin is found that lines the wall of the exit tunnel in the center of the 70S ribosome. The protein is Large ribosomal subunit protein uL22 of Trichormus variabilis (strain ATCC 29413 / PCC 7937) (Anabaena variabilis).